We begin with the raw amino-acid sequence, 569 residues long: Pyrophosphate--fructose 6-phosphate 1-phosphotransferase subunit beta 2 (569 aa).

Gly107 is a binding site for diphosphate. Position 201 (Asp201) interacts with Mg(2+). Residues 229–231 (TID), 268–269 (KY), 276–278 (MGR), Glu337, and 442–445 (YEGR) each bind substrate. Asp231 acts as the Proton acceptor in catalysis.

This sequence belongs to the phosphofructokinase type A (PFKA) family. PPi-dependent PFK group II subfamily. Clade 'Long' sub-subfamily. Tetramer of two alpha (regulatory) and two beta (catalytic) chains. Mg(2+) is required as a cofactor.

The protein localises to the cytoplasm. The enzyme catalyses beta-D-fructose 6-phosphate + diphosphate = beta-D-fructose 1,6-bisphosphate + phosphate + H(+). It participates in carbohydrate degradation; glycolysis; D-glyceraldehyde 3-phosphate and glycerone phosphate from D-glucose: step 3/4. Allosterically activated by fructose 2,6-bisphosphate. Catalytic subunit of pyrophosphate--fructose 6-phosphate 1-phosphotransferase. Catalyzes the phosphorylation of D-fructose 6-phosphate, the first committing step of glycolysis. Uses inorganic phosphate (PPi) as phosphoryl donor instead of ATP like common ATP-dependent phosphofructokinases (ATP-PFKs), which renders the reaction reversible, and can thus function both in glycolysis and gluconeogenesis. This is Pyrophosphate--fructose 6-phosphate 1-phosphotransferase subunit beta 2 from Arabidopsis thaliana (Mouse-ear cress).